We begin with the raw amino-acid sequence, 557 residues long: Beta-amylase 2, chloroplastic (557 aa).

Residues 1 to 38 (MMSLNLAHQTGAAAAVAPAAPRTAVVAAAAGTVSAPAV) constitute a chloroplast transit peptide. Residues Asp135, His175, and Asp183 each contribute to the substrate site. The active-site Proton donor is the Glu267. 3 residues coordinate substrate: Lys380, His385, and Thr427. The active-site Proton acceptor is Glu465. Residues 466–467 (NA) and Arg499 contribute to the substrate site.

Belongs to the glycosyl hydrolase 14 family.

The protein resides in the plastid. It localises to the chloroplast. The catalysed reaction is Hydrolysis of (1-&gt;4)-alpha-D-glucosidic linkages in polysaccharides so as to remove successive maltose units from the non-reducing ends of the chains.. Its function is as follows. Possesses beta-amylase activity in vitro. May be involved in cold resistance by mediating the accumulation of maltose upon freezing stress, thus contributing to the protection of membranes. In Oryza sativa subsp. japonica (Rice), this protein is Beta-amylase 2, chloroplastic.